The sequence spans 229 residues: Ribonuclease T (229 aa).

Residues 23-197 (VIIDVETAGF…YDTERTAKLF (175 aa)) enclose the Exonuclease domain. Mg(2+) is bound by residues D26, E28, H184, and D189. The Proton donor/acceptor role is filled by H184.

The protein belongs to the RNase T family. In terms of assembly, homodimer. The cofactor is Mg(2+).

Functionally, trims short 3' overhangs of a variety of RNA species, leaving a one or two nucleotide 3' overhang. Responsible for the end-turnover of tRNA: specifically removes the terminal AMP residue from uncharged tRNA (tRNA-C-C-A). Also appears to be involved in tRNA biosynthesis. This is Ribonuclease T from Haemophilus influenzae (strain PittGG).